Reading from the N-terminus, the 765-residue chain is 5-methyltetrahydropteroyltriglutamate--homocysteine methyltransferase (765 aa).

5-methyltetrahydropteroyltri-L-glutamate-binding positions include 18-21 (REWK) and Lys114. L-homocysteine contacts are provided by residues 437-439 (IGS) and Glu490. L-methionine contacts are provided by residues 437 to 439 (IGS) and Glu490. Trp567 is a 5-methyltetrahydropteroyltri-L-glutamate binding site. Asp605 lines the L-homocysteine pocket. Asp605 is a binding site for L-methionine. Glu611 lines the 5-methyltetrahydropteroyltri-L-glutamate pocket. His647, Cys649, and Glu671 together coordinate Zn(2+). Catalysis depends on His700, which acts as the Proton donor. Residue Cys732 participates in Zn(2+) binding.

The protein belongs to the vitamin-B12 independent methionine synthase family. The cofactor is Zn(2+).

The catalysed reaction is 5-methyltetrahydropteroyltri-L-glutamate + L-homocysteine = tetrahydropteroyltri-L-glutamate + L-methionine. It functions in the pathway amino-acid biosynthesis; L-methionine biosynthesis via de novo pathway; L-methionine from L-homocysteine (MetE route): step 1/1. In terms of biological role, catalyzes the transfer of a methyl group from 5-methyltetrahydrofolate to homocysteine resulting in methionine formation. This chain is 5-methyltetrahydropteroyltriglutamate--homocysteine methyltransferase, found in Listeria monocytogenes serotype 4b (strain F2365).